The following is a 242-amino-acid chain: Probable ergothioneine transport ATP-binding protein EgtUA (242 aa).

Positions 2–236 (IEYKNVALRY…PATDFVADLF (235 aa)) constitute an ABC transporter domain. 34-41 (GPSGSGKT) is a binding site for ATP.

The protein belongs to the ABC transporter superfamily. In terms of assembly, the complex is probably composed of at least an ATP-binding protein (EgtUA) and a transmembrane protein (EgtUBC).

It localises to the cell inner membrane. The catalysed reaction is ergothioneine(out) + ATP + H2O = ergothioneine(in) + ADP + phosphate + H(+). Its function is as follows. Part of an ABC transporter complex EgtU required for the uptake of ergothioneine (EGT), a natural low-molecular weight (LMW) thiol antioxidant. Probably responsible for energy coupling to the transport system. This Streptococcus pneumoniae serotype 2 (strain D39 / NCTC 7466) protein is Probable ergothioneine transport ATP-binding protein EgtUA.